The primary structure comprises 158 residues: 2-C-methyl-D-erythritol 2,4-cyclodiphosphate synthase (158 aa).

Residues Asp-10 and His-12 each contribute to the a divalent metal cation site. 4-CDP-2-C-methyl-D-erythritol 2-phosphate-binding positions include 10–12 (DVH) and 36–37 (HS). Residue His-44 coordinates a divalent metal cation. 4-CDP-2-C-methyl-D-erythritol 2-phosphate is bound by residues 58–60 (DIG), 63–67 (FSDTD), and Arg-144.

It belongs to the IspF family. Homotrimer. It depends on a divalent metal cation as a cofactor.

It carries out the reaction 4-CDP-2-C-methyl-D-erythritol 2-phosphate = 2-C-methyl-D-erythritol 2,4-cyclic diphosphate + CMP. It functions in the pathway isoprenoid biosynthesis; isopentenyl diphosphate biosynthesis via DXP pathway; isopentenyl diphosphate from 1-deoxy-D-xylulose 5-phosphate: step 4/6. Its function is as follows. Involved in the biosynthesis of isopentenyl diphosphate (IPP) and dimethylallyl diphosphate (DMAPP), two major building blocks of isoprenoid compounds. Catalyzes the conversion of 4-diphosphocytidyl-2-C-methyl-D-erythritol 2-phosphate (CDP-ME2P) to 2-C-methyl-D-erythritol 2,4-cyclodiphosphate (ME-CPP) with a corresponding release of cytidine 5-monophosphate (CMP). In Burkholderia vietnamiensis (strain G4 / LMG 22486) (Burkholderia cepacia (strain R1808)), this protein is 2-C-methyl-D-erythritol 2,4-cyclodiphosphate synthase.